Here is a 576-residue protein sequence, read N- to C-terminus: WD repeat-containing protein 26 (576 aa).

Polar residues predominate over residues 1–20; it reads MQSNGTGQEQNHPANTQNGD. The tract at residues 1 to 46 is disordered; that stretch reads MQSNGTGQEQNHPANTQNGDANGLQSNAGSASGASGTGSGSLKKKK. Over residues 21–34 the composition is skewed to low complexity; the sequence is ANGLQSNAGSASGA. Serine 49 bears the Phosphoserine mark. In terms of domain architecture, LisH spans 51–83; sequence AEEDVIRLIGQHLHGLGLNQTVDLLMQESGCRL. The 60-residue stretch at 84–143 folds into the CTLH domain; it reads EHSSATKFRNHVMEGEWDKAENDLNELKALMHSPNAIVRMKFLLLQQKYLEYLEDGKVLE. WD repeat units follow at residues 265–304, 311–350, 356–396, 436–475, 478–520, and 523–563; these read EHCN…HQLK, GHAY…GELR, SHED…ESWE, QEDH…LVRK, GVTQ…PIVE, and GHTR…DAQE.

As to quaternary structure, forms homooligomers. Identified in the CTLH complex that contains at least MAEA, RMND5A (or alternatively its paralog RMND5B), GID8, WDR26, and RANBP9 and/or RANBP10. Interacts with DDB1-CUL4A/B E3 ligase complexes.

The protein localises to the cytoplasm. The protein resides in the nucleus. It localises to the mitochondrion. G-beta-like protein involved in cell signal transduction. Acts as a negative regulator in MAPK signaling pathway. Functions as a scaffolding protein to promote G beta:gamma-mediated PLCB2 plasma membrane translocation and subsequent activation in leukocytes. Core component of the CTLH E3 ubiquitin-protein ligase complex that mediates ubiquitination and subsequent proteasomal degradation of target proteins. Acts as a negative regulator of the canonical Wnt signaling pathway through preventing ubiquitination of beta-catenin CTNNB1 by the beta-catenin destruction complex, thus negatively regulating CTNNB1 degradation. Serves as a scaffold to coordinate PI3K/AKT pathway-driven cell growth and migration. Protects cells from oxidative stress-induced apoptosis via the down-regulation of AP-1 transcriptional activity as well as by inhibiting cytochrome c release from mitochondria. Also protects cells by promoting hypoxia-mediated autophagy and mitophagy. In Danio rerio (Zebrafish), this protein is WD repeat-containing protein 26 (wdr26).